The primary structure comprises 158 residues: 6,7-dimethyl-8-ribityllumazine synthase (158 aa).

5-amino-6-(D-ribitylamino)uracil contacts are provided by residues phenylalanine 24, 58 to 60 (AFE), and 82 to 84 (AVI). 87-88 (GT) is a binding site for (2S)-2-hydroxy-3-oxobutyl phosphate. The Proton donor role is filled by histidine 90. Residue phenylalanine 115 coordinates 5-amino-6-(D-ribitylamino)uracil. Arginine 129 provides a ligand contact to (2S)-2-hydroxy-3-oxobutyl phosphate.

This sequence belongs to the DMRL synthase family. As to quaternary structure, forms an icosahedral capsid composed of 60 subunits, arranged as a dodecamer of pentamers.

It carries out the reaction (2S)-2-hydroxy-3-oxobutyl phosphate + 5-amino-6-(D-ribitylamino)uracil = 6,7-dimethyl-8-(1-D-ribityl)lumazine + phosphate + 2 H2O + H(+). The protein operates within cofactor biosynthesis; riboflavin biosynthesis; riboflavin from 2-hydroxy-3-oxobutyl phosphate and 5-amino-6-(D-ribitylamino)uracil: step 1/2. Functionally, catalyzes the formation of 6,7-dimethyl-8-ribityllumazine by condensation of 5-amino-6-(D-ribitylamino)uracil with 3,4-dihydroxy-2-butanone 4-phosphate. This is the penultimate step in the biosynthesis of riboflavin. The polypeptide is 6,7-dimethyl-8-ribityllumazine synthase (Pseudomonas paraeruginosa (strain DSM 24068 / PA7) (Pseudomonas aeruginosa (strain PA7))).